Consider the following 112-residue polypeptide: Large ribosomal subunit protein bL17 (112 aa).

This sequence belongs to the bacterial ribosomal protein bL17 family. As to quaternary structure, part of the 50S ribosomal subunit. Contacts protein L32.

This Desulforudis audaxviator (strain MP104C) protein is Large ribosomal subunit protein bL17.